Here is an 862-residue protein sequence, read N- to C-terminus: MYRRTTLWFLLLFQPILVFAQNRTELYECKIGTVNPLASTSLNACFKLYNTPKSFQAARRYCVSLGGQLADKINKDDSSLYSANADLEVANSTKFWVGASNLKCNIAWENGGEIEFNDMWAPESRYYGVAIDKMSIGGLWHTVPVGQKLPFVCTFQGKSNEAGPAPVHAMRAPAKKRVPKVEKPEEKDIDESLNAALSDKKEKKEVASDKKKESKKDEEDINESMNAALSDERKKSASLASSDKKESSKKDESSDEANLSASQVANAEMSASISASSANSSSDESSDEAYDSAEIEMRKKIGKTVIAMKSQEMASQSDDYDKYTEEDLLSAAASLIGGYILNAHWADSRTTNTSSFDSQTDEETLNMMMAIAEQIAMTMRSSKRRESSSSNTDSESASISESSQASEQAVMAAAMSAKSSKKSESSSKDESEDSASLNLEQKASAAASAALASKSKSDSSDQSKDQKSANVALAVVSENKHPTKKPEDPKSTKTTTEEPDIDESLNAALANQRSTTTKNSDLTTIITTVKPNALPIAIVAKQSEKDPACPAEWTQFNTNATAPALCFKRYEKPMNFEDARLFCVGKGGHLASIHNERQLLLLSALLHNNGPDALSDQTWIGLNRIHQKYYVYEDETAMDFTRWLPGAPNINDCTVFTGNELPNYPHKGTQYKFGDFPCEEVQKSVLCEVTLGKDKLKSQTTCQDGWSYYSHDGTAKNGKCYKRIDQSKKFSEAREVCKVENSYVASVQNEGEARFVSALVQTEKNYTVDEQTWIGYVKYDRDFGWEDGNKGLQFDPWTEKMPRQKKCTVFTGNEIHENCRSQFRFVSVDCNKTQRSVLCSKPPMKNGTPFVYKDTDNSSKKI.

A signal peptide spans 1 to 20; sequence MYRRTTLWFLLLFQPILVFA. N22 and N91 each carry an N-linked (GlcNAc...) asparagine glycan. One can recognise a C-type lectin 1 domain in the interval 41 to 154; the sequence is SLNACFKLYN…VGQKLPFVCT (114 aa). C62 and C153 are disulfide-bonded. Positions 162 to 291 are disordered; the sequence is AGPAPVHAMR…SDESSDEAYD (130 aa). The span at 198–218 shows a compositional bias: basic and acidic residues; that stretch reads SDKKEKKEVASDKKKESKKDE. A glycan (N-linked (GlcNAc...) asparagine) is linked at N222. The span at 242–252 shows a compositional bias: basic and acidic residues; it reads SDKKESSKKDE. N258, N279, and N352 each carry an N-linked (GlcNAc...) asparagine glycan. Over residues 265–283 the composition is skewed to low complexity; the sequence is ANAEMSASISASSANSSSD. Disordered stretches follow at residues 377–437, 450–469, and 474–504; these read MTMR…SASL, ALAS…QKSA, and AVVS…IDES. Positions 388–418 are enriched in low complexity; the sequence is SSSNTDSESASISESSQASEQAVMAAAMSAK. 2 stretches are compositionally biased toward basic and acidic residues: residues 455 to 467 and 478 to 491; these read SKSD…KDQK and ENKH…DPKS. Residue N559 is glycosylated (N-linked (GlcNAc...) asparagine). C-type lectin domains lie at 562–687 and 716–828; these read APAL…SVLC and KNGK…FVSV. The cysteines at positions 653 and 678 are disulfide-linked. N765 is a glycosylation site (N-linked (GlcNAc...) asparagine). A disulfide bridge connects residues C807 and C819. N-linked (GlcNAc...) asparagine glycosylation is found at N831 and N857.

It is found in the secreted. This Caenorhabditis elegans protein is C-type lectin domain-containing protein 161 (clec-161).